The primary structure comprises 318 residues: uncharacterized protein (318 aa).

The protein to E.coli YfaT and P.aeruginosa PA4490.

This is an uncharacterized protein from Thermotoga maritima (strain ATCC 43589 / DSM 3109 / JCM 10099 / NBRC 100826 / MSB8).